Consider the following 1674-residue polypeptide: Maestro heat-like repeat-containing protein family member 2A (1674 aa).

A disordered region spans residues 1-26 (MTEAITEAAVASSEEVSEERDDLGPL). HEAT repeat units follow at residues 73–96 (ATTE…ISTQ), 97–133 (RKVN…EMRE), 195–234 (MPYM…TVQF), 254–292 (LKVF…LLLP), 382–419 (SYPK…ADEP), 424–461 (RAIY…CGYQ), 573–612 (PAPQ…SIAP), 615–641 (ADMW…DQKA), 642–679 (WEDK…SFDS), 739–776 (KTVL…ETVK), 993–1030 (GQFG…LHAS), 1221–1263 (DPLM…SHRP), 1381–1420 (EKLL…GAPK), and 1627–1674 (LDFP…QGMS).

The protein is Maestro heat-like repeat-containing protein family member 2A (MROH2A) of Homo sapiens (Human).